Consider the following 670-residue polypeptide: Probable urocanate hydratase (670 aa).

NAD(+) contacts are provided by residues 126–127 (GG), Q204, 250–252 (GMS), E270, 316–317 (NV), 338–342 (QTSLH), 349–350 (FY), Y398, and G590.

It belongs to the urocanase family. Requires NAD(+) as cofactor.

The enzyme catalyses 4-imidazolone-5-propanoate = trans-urocanate + H2O. The protein operates within amino-acid degradation; L-histidine degradation into L-glutamate; N-formimidoyl-L-glutamate from L-histidine: step 2/3. This is Probable urocanate hydratase from Caenorhabditis elegans.